A 303-amino-acid polypeptide reads, in one-letter code: Oxygen-dependent coproporphyrinogen-III oxidase (303 aa).

Serine 93 provides a ligand contact to substrate. Histidine 97 and histidine 107 together coordinate a divalent metal cation. The Proton donor role is filled by histidine 107. 109–111 (NVR) serves as a coordination point for substrate. Residues histidine 146 and histidine 176 each coordinate a divalent metal cation. An important for dimerization region spans residues 241 to 276 (YVEFNLVYDRGTLFGLQSGGRTESILMSLPPQVRWG). 259–261 (GGR) is a binding site for substrate.

Belongs to the aerobic coproporphyrinogen-III oxidase family. Homodimer. A divalent metal cation serves as cofactor.

The protein resides in the cytoplasm. The enzyme catalyses coproporphyrinogen III + O2 + 2 H(+) = protoporphyrinogen IX + 2 CO2 + 2 H2O. It participates in porphyrin-containing compound metabolism; protoporphyrin-IX biosynthesis; protoporphyrinogen-IX from coproporphyrinogen-III (O2 route): step 1/1. Involved in the heme biosynthesis. Catalyzes the aerobic oxidative decarboxylation of propionate groups of rings A and B of coproporphyrinogen-III to yield the vinyl groups in protoporphyrinogen-IX. This is Oxygen-dependent coproporphyrinogen-III oxidase from Pseudomonas putida (strain W619).